We begin with the raw amino-acid sequence, 196 residues long: MTQPIKLLVGLANPGPEYAKTRHNAGAWVVEELARVHNVTLKNEPKFFGLTGRIMVNGQDLRLLIPTTFMNLSGKAIAALAKFYQIKPEEIMVAHDELDLLPGVAKFKKGGGHGGHNGLRDTISKLGNNKDFYRLRIGIGHPGHKDKVAGFVLGKAPAKEQELLDAAADESVRCLDILIKDGLSKAQNRLHTFKAE.

Tyr18 provides a ligand contact to tRNA. The active-site Proton acceptor is the His23. TRNA is bound by residues Phe69, Asn71, and Asn117.

It belongs to the PTH family. In terms of assembly, monomer.

It localises to the cytoplasm. It carries out the reaction an N-acyl-L-alpha-aminoacyl-tRNA + H2O = an N-acyl-L-amino acid + a tRNA + H(+). In terms of biological role, hydrolyzes ribosome-free peptidyl-tRNAs (with 1 or more amino acids incorporated), which drop off the ribosome during protein synthesis, or as a result of ribosome stalling. Catalyzes the release of premature peptidyl moieties from peptidyl-tRNA molecules trapped in stalled 50S ribosomal subunits, and thus maintains levels of free tRNAs and 50S ribosomes. This is Peptidyl-tRNA hydrolase from Vibrio campbellii (strain ATCC BAA-1116).